Reading from the N-terminus, the 1448-residue chain is Gag-Pol polyprotein (1448 aa).

G2 carries the N-myristoyl glycine; by host lipid modification. A Nuclear export signal motif is present at residues 16 to 22 (LEKIRLR). The Nuclear localization signal signature appears at 26 to 32 (KKKYMLK). The segment covering 218–227 (HPQQAPQQGQ) has biased composition (low complexity). Residues 218–237 (HPQQAPQQGQLREPSGSDIA) are disordered. 2 consecutive CCHC-type zinc fingers follow at residues 391-408 (IKCW…QCRA) and 412-429 (QGCW…KCPN). The disordered stretch occupies residues 440-461 (LGKEAPQFPHGSSASGADANCS). The region spanning 517 to 586 (VEVLLDTGAD…TPINIFGRNL (70 aa)) is the Peptidase A2 domain. The active-site For protease activity; shared with dimeric partner is the D522. The Reverse transcriptase domain occupies 640-830 (DGQLEEAPPT…PPFQWMGYEL (191 aa)). Mg(2+) contacts are provided by D706, D781, and D782. Positions 823-831 (FQWMGYELW) are RT 'primer grip'. Positions 993–1009 (WEQWWTDYWQVTWIPEW) match the Tryptophan repeat motif motif. Residues 1029-1152 (IEGEETYYVD…IDHLVSQGIR (124 aa)) form the RNase H type-1 domain. Mg(2+)-binding residues include D1038, E1073, D1093, and D1144. The segment at 1158 to 1199 (EKIEPAQEEHSKYHSNIKELVFKFGLPRLVAKQIVDTCDKCH) adopts an Integrase-type zinc-finger fold. Positions 1167, 1171, 1195, and 1198 each coordinate Zn(2+). One can recognise an Integrase catalytic domain in the interval 1209-1359 (VNSDLGTWQM…TPAERLINMI (151 aa)). The Mg(2+) site is built by D1219 and D1271. Positions 1378 to 1425 (FRVYYREGRDQLWKGPGELLWKGEGAVILKVGTDIKVVPRRKAKIIKD) form a DNA-binding region, integrase-type. The segment at 1426–1448 (YGGGKEMDSSSHMEDTGEAREVA) is disordered.

In terms of assembly, homotrimer. Interacts with gp41 (via C-terminus). As to quaternary structure, homodimer. The active site consists of two apposed aspartic acid residues. Heterodimer of p66 RT and p51 RT (RT p66/p51). Heterodimerization of RT is essential for DNA polymerase activity. Despite the sequence identities, p66 RT and p51 RT have distinct folding. In terms of assembly, homotetramer; may further associate as a homohexadecamer. Mg(2+) serves as cofactor. Specific enzymatic cleavages by the viral protease yield mature proteins. The protease is released by autocatalytic cleavage. The polyprotein is cleaved during and after budding, this process is termed maturation. Proteolytic cleavage of p66 RT removes the RNase H domain to yield the p51 RT subunit. In terms of processing, capsid protein p24 is phosphorylated.

Its subcellular location is the virion. It localises to the host nucleus. It is found in the host cytoplasm. The protein resides in the host cell membrane. The enzyme catalyses Specific for a P1 residue that is hydrophobic, and P1' variable, but often Pro.. The catalysed reaction is Endohydrolysis of RNA in RNA/DNA hybrids. Three different cleavage modes: 1. sequence-specific internal cleavage of RNA. Human immunodeficiency virus type 1 and Moloney murine leukemia virus enzymes prefer to cleave the RNA strand one nucleotide away from the RNA-DNA junction. 2. RNA 5'-end directed cleavage 13-19 nucleotides from the RNA end. 3. DNA 3'-end directed cleavage 15-20 nucleotides away from the primer terminus.. It carries out the reaction 3'-end directed exonucleolytic cleavage of viral RNA-DNA hybrid.. It catalyses the reaction DNA(n) + a 2'-deoxyribonucleoside 5'-triphosphate = DNA(n+1) + diphosphate. The viral protease is inhibited by many synthetic protease inhibitors (PIs), such as amprenavir, atazanavir, indinavir, loprinavir, nelfinavir, ritonavir and saquinavir. RT can be inhibited either by nucleoside RT inhibitors (NRTIs) or by non nucleoside RT inhibitors (NNRTIs). NRTIs act as chain terminators, whereas NNRTIs inhibit DNA polymerization by binding a small hydrophobic pocket near the RT active site and inducing an allosteric change in this region. Classical NRTIs are abacavir, adefovir (PMEA), didanosine (ddI), lamivudine (3TC), stavudine (d4T), tenofovir (PMPA), zalcitabine (ddC), and zidovudine (AZT). Classical NNRTIs are atevirdine (BHAP U-87201E), delavirdine, efavirenz (DMP-266), emivirine (I-EBU), and nevirapine (BI-RG-587). The tritherapies used as a basic effective treatment of AIDS associate two NRTIs and one NNRTI. Use of protease inhibitors in tritherapy regimens permit more ambitious therapeutic strategies. Its function is as follows. Gag-Pol polyprotein and Gag polyprotein may regulate their own translation, by the binding genomic RNA in the 5'-UTR. At low concentration, Gag-Pol and Gag would promote translation, whereas at high concentration, the polyproteins encapsidate genomic RNA and then shut off translation. Matrix protein p17 has two main functions: in infected cell, it targets Gag and Gag-pol polyproteins to the plasma membrane via a multipartite membrane-binding signal, that includes its myristointegration complex. The myristoylation signal and the NLS exert conflicting influences its subcellular localization. The key regulation of these motifs might be phosphorylation of a portion of MA molecules on the C-terminal tyrosine at the time of virus maturation, by virion-associated cellular tyrosine kinase. Implicated in the release from host cell mediated by Vpu. In terms of biological role, capsid protein p24 forms the conical core that encapsulates the genomic RNA-nucleocapsid complex in the virion. The core is constituted by capsid protein hexamer subunits. The core is disassembled soon after virion entry. Interaction with host PPIA/CYPA protects the virus from restriction by host TRIM5-alpha and from an unknown antiviral activity in host cells. This capsid restriction by TRIM5 is one of the factors which restricts SIV to the simian species. Functionally, nucleocapsid protein p7 encapsulates and protects viral dimeric unspliced (genomic) RNA. Binds these RNAs through its zinc fingers. Facilitates rearangement of nucleic acid secondary structure during retrotranscription of genomic RNA. This capability is referred to as nucleic acid chaperone activity. Its function is as follows. The aspartyl protease mediates proteolytic cleavages of Gag and Gag-Pol polyproteins during or shortly after the release of the virion from the plasma membrane. Cleavages take place as an ordered, step-wise cascade to yield mature proteins. This process is called maturation. Displays maximal activity during the budding process just prior to particle release from the cell. Also cleaves Nef and Vif, probably concomitantly with viral structural proteins on maturation of virus particles. Hydrolyzes host EIF4GI and PABP1 in order to shut off the capped cellular mRNA translation. The resulting inhibition of cellular protein synthesis serves to ensure maximal viral gene expression and to evade host immune response. Reverse transcriptase/ribonuclease H (RT) is a multifunctional enzyme that converts the viral dimeric RNA genome into dsDNA in the cytoplasm, shortly after virus entry into the cell. This enzyme displays a DNA polymerase activity that can copy either DNA or RNA templates, and a ribonuclease H (RNase H) activity that cleaves the RNA strand of RNA-DNA heteroduplexes in a partially processive 3' to 5' endonucleasic mode. Conversion of viral genomic RNA into dsDNA requires many steps. A tRNA binds to the primer-binding site (PBS) situated at the 5'-end of the viral RNA. RT uses the 3' end of the tRNA primer to perform a short round of RNA-dependent minus-strand DNA synthesis. The reading proceeds through the U5 region and ends after the repeated (R) region which is present at both ends of viral RNA. The portion of the RNA-DNA heteroduplex is digested by the RNase H, resulting in a ssDNA product attached to the tRNA primer. This ssDNA/tRNA hybridizes with the identical R region situated at the 3' end of viral RNA. This template exchange, known as minus-strand DNA strong stop transfer, can be either intra- or intermolecular. RT uses the 3' end of this newly synthesized short ssDNA to perform the RNA-dependent minus-strand DNA synthesis of the whole template. RNase H digests the RNA template except for two polypurine tracts (PPTs) situated at the 5'-end and near the center of the genome. It is not clear if both polymerase and RNase H activities are simultaneous. RNase H can probably proceed both in a polymerase-dependent (RNA cut into small fragments by the same RT performing DNA synthesis) and a polymerase-independent mode (cleavage of remaining RNA fragments by free RTs). Secondly, RT performs DNA-directed plus-strand DNA synthesis using the PPTs that have not been removed by RNase H as primers. PPTs and tRNA primers are then removed by RNase H. The 3' and 5' ssDNA PBS regions hybridize to form a circular dsDNA intermediate. Strand displacement synthesis by RT to the PBS and PPT ends produces a blunt ended, linear dsDNA copy of the viral genome that includes long terminal repeats (LTRs) at both ends. In terms of biological role, integrase catalyzes viral DNA integration into the host chromosome, by performing a series of DNA cutting and joining reactions. This enzyme activity takes place after virion entry into a cell and reverse transcription of the RNA genome in dsDNA. The first step in the integration process is 3' processing. This step requires a complex comprising the viral genome, matrix protein, Vpr and integrase. This complex is called the pre-integration complex (PIC). The integrase protein removes 2 nucleotides from each 3' end of the viral DNA, leaving recessed CA OH's at the 3' ends. In the second step, the PIC enters cell nucleus. This process is mediated through integrase and Vpr proteins, and allows the virus to infect a non dividing cell. This ability to enter the nucleus is specific of lentiviruses, other retroviruses cannot and rely on cell division to access cell chromosomes. In the third step, termed strand transfer, the integrase protein joins the previously processed 3' ends to the 5' ends of strands of target cellular DNA at the site of integration. The 5'-ends are produced by integrase-catalyzed staggered cuts, 5 bp apart. A Y-shaped, gapped, recombination intermediate results, with the 5'-ends of the viral DNA strands and the 3' ends of target DNA strands remaining unjoined, flanking a gap of 5 bp. The last step is viral DNA integration into host chromosome. This involves host DNA repair synthesis in which the 5 bp gaps between the unjoined strands are filled in and then ligated. Since this process occurs at both cuts flanking the SIV genome, a 5 bp duplication of host DNA is produced at the ends of SIV integration. Alternatively, Integrase may catalyze the excision of viral DNA just after strand transfer, this is termed disintegration. This Cercopithecidae (Old World monkeys) protein is Gag-Pol polyprotein (gag-pol).